Here is an 860-residue protein sequence, read N- to C-terminus: Leucine--tRNA ligase (860 aa).

The 'HIGH' region signature appears at 42–52 (PYPSGRLHMGH). A 'KMSKS' region motif is present at residues 619–623 (KMSKS). Position 622 (K622) interacts with ATP.

The protein belongs to the class-I aminoacyl-tRNA synthetase family.

Its subcellular location is the cytoplasm. The enzyme catalyses tRNA(Leu) + L-leucine + ATP = L-leucyl-tRNA(Leu) + AMP + diphosphate. The protein is Leucine--tRNA ligase of Escherichia coli O6:K15:H31 (strain 536 / UPEC).